A 283-amino-acid polypeptide reads, in one-letter code: Co-chaperone protein DjlA (283 aa).

At 1–6 the chain is on the periplasmic side; it reads MQIFGK. The chain crosses the membrane as a helical span at residues 7-30; sequence ILGGFFGFLFGGFFGAALGIFIGH. At 31–283 the chain is on the cytoplasmic side; it reads QFDKAKRMAN…DLIKKEKGIK (253 aa). The segment covering 188–197 has biased composition (gly residues); sequence QGGGFSGHQS. Residues 188–210 form a disordered region; that stretch reads QGGGFSGHQSGGSHQQGQWQQAS. The segment covering 198–210 has biased composition (low complexity); it reads GGSHQQGQWQQAS. The 67-residue stretch at 217–283 folds into the J domain; the sequence is DAYNLLGISE…DLIKKEKGIK (67 aa).

As to quaternary structure, homodimer.

The protein localises to the cell inner membrane. Functionally, regulatory DnaK co-chaperone. Direct interaction between DnaK and DjlA is needed for the induction of the wcaABCDE operon, involved in the synthesis of a colanic acid polysaccharide capsule, possibly through activation of the RcsB/RcsC phosphotransfer signaling pathway. The colanic acid capsule may help the bacterium survive conditions outside the host. The sequence is that of Co-chaperone protein DjlA from Aliivibrio fischeri (strain ATCC 700601 / ES114) (Vibrio fischeri).